Consider the following 285-residue polypeptide: 2-dehydro-3-deoxyphosphooctonate aldolase (285 aa).

The protein belongs to the KdsA family.

The protein localises to the cytoplasm. The enzyme catalyses D-arabinose 5-phosphate + phosphoenolpyruvate + H2O = 3-deoxy-alpha-D-manno-2-octulosonate-8-phosphate + phosphate. Its pathway is carbohydrate biosynthesis; 3-deoxy-D-manno-octulosonate biosynthesis; 3-deoxy-D-manno-octulosonate from D-ribulose 5-phosphate: step 2/3. It functions in the pathway bacterial outer membrane biogenesis; lipopolysaccharide biosynthesis. The protein is 2-dehydro-3-deoxyphosphooctonate aldolase of Acinetobacter baylyi (strain ATCC 33305 / BD413 / ADP1).